Consider the following 484-residue polypeptide: Probable cobyric acid synthase (484 aa).

The GATase cobBQ-type domain occupies 247-433 (ELHIQIVKLP…LHGIFHNFAF (187 aa)). Cys-325 acts as the Nucleophile in catalysis. The active site involves His-425.

Belongs to the CobB/CobQ family. CobQ subfamily.

It participates in cofactor biosynthesis; adenosylcobalamin biosynthesis. Functionally, catalyzes amidations at positions B, D, E, and G on adenosylcobyrinic A,C-diamide. NH(2) groups are provided by glutamine, and one molecule of ATP is hydrogenolyzed for each amidation. The polypeptide is Probable cobyric acid synthase (Thermococcus onnurineus (strain NA1)).